Consider the following 1171-residue polypeptide: ATP-dependent helicase/deoxyribonuclease subunit B (1171 aa).

The region spanning 1–343 (MSLRFVIGRA…LVAEENYRYR (343 aa)) is the UvrD-like helicase ATP-binding domain. 8-15 (GRAGSGKS) serves as a coordination point for ATP. A UvrD-like helicase C-terminal domain is found at 281–587 (MEQPRFHSPA…QFANIPPSLD (307 aa)). Residues cysteine 805, cysteine 1129, cysteine 1132, and cysteine 1138 each coordinate [4Fe-4S] cluster.

This sequence belongs to the helicase family. AddB/RexB type 1 subfamily. In terms of assembly, heterodimer of AddA and AddB. Mg(2+) is required as a cofactor. [4Fe-4S] cluster serves as cofactor.

In terms of biological role, the heterodimer acts as both an ATP-dependent DNA helicase and an ATP-dependent, dual-direction single-stranded exonuclease. Recognizes the chi site generating a DNA molecule suitable for the initiation of homologous recombination. The AddB subunit has 5' -&gt; 3' nuclease activity but not helicase activity. The chain is ATP-dependent helicase/deoxyribonuclease subunit B from Bacillus thuringiensis (strain Al Hakam).